A 423-amino-acid polypeptide reads, in one-letter code: Kynureninase (423 aa).

Pyridoxal 5'-phosphate contacts are provided by residues Leu105, Ser106, 133 to 136 (FPSD), Asp218, His221, and Tyr243. Lys244 carries the post-translational modification N6-(pyridoxal phosphate)lysine. Pyridoxal 5'-phosphate-binding residues include Trp273 and Asn301.

It belongs to the kynureninase family. Homodimer. Requires pyridoxal 5'-phosphate as cofactor.

It catalyses the reaction L-kynurenine + H2O = anthranilate + L-alanine + H(+). It carries out the reaction 3-hydroxy-L-kynurenine + H2O = 3-hydroxyanthranilate + L-alanine + H(+). Its pathway is amino-acid degradation; L-kynurenine degradation; L-alanine and anthranilate from L-kynurenine: step 1/1. It participates in cofactor biosynthesis; NAD(+) biosynthesis; quinolinate from L-kynurenine: step 2/3. Catalyzes the cleavage of L-kynurenine (L-Kyn) and L-3-hydroxykynurenine (L-3OHKyn) into anthranilic acid (AA) and 3-hydroxyanthranilic acid (3-OHAA), respectively. The protein is Kynureninase of Xanthomonas euvesicatoria pv. vesicatoria (strain 85-10) (Xanthomonas campestris pv. vesicatoria).